The primary structure comprises 201 residues: Adenylyl-sulfate kinase (201 aa).

35–42 (GLSGSGKS) is an ATP binding site. The active-site Phosphoserine intermediate is Ser109.

This sequence belongs to the APS kinase family.

It catalyses the reaction adenosine 5'-phosphosulfate + ATP = 3'-phosphoadenylyl sulfate + ADP + H(+). The protein operates within sulfur metabolism; hydrogen sulfide biosynthesis; sulfite from sulfate: step 2/3. Functionally, catalyzes the synthesis of activated sulfate. In Citrobacter koseri (strain ATCC BAA-895 / CDC 4225-83 / SGSC4696), this protein is Adenylyl-sulfate kinase.